Here is a 624-residue protein sequence, read N- to C-terminus: uncharacterized protein (624 aa).

The disordered stretch occupies residues 113 to 249 (SINVRTSATT…RFHPVTDINK (137 aa)). Over residues 118–225 (TSATTTESTN…ATTTESTNAS (108 aa)) the composition is skewed to low complexity. Basic and acidic residues predominate over residues 226–249 (AKEDANKDGNAEDNRFHPVTDINK).

This is an uncharacterized protein from Saccharomyces cerevisiae (strain ATCC 204508 / S288c) (Baker's yeast).